The chain runs to 487 residues: Serralysin (487 aa).

Positions 1-16 are excised as a propeptide; sequence MQSTKKAIEITESNFA. Histidine 192 is a Zn(2+) binding site. Glutamate 193 is an active-site residue. Residues histidine 196, histidine 202, and tyrosine 232 each coordinate Zn(2+). The Ca(2+) site is built by arginine 269, glycine 271, threonine 273, aspartate 301, glycine 303, glycine 304, aspartate 306, threonine 343, glutamate 345, glycine 350, glycine 352, aspartate 354, asparagine 359, alanine 361, asparagine 363, glycine 367, glycine 368, alanine 369, aspartate 372, glycine 376, glycine 377, glycine 378, glycine 379, aspartate 381, glycine 385, glycine 386, alanine 387, glycine 388, aspartate 390, aspartate 399, aspartate 406, and aspartate 416. Hemolysin-type calcium-binding repeat units follow at residues 348-365 and 366-383; these read IGGS…NNVL and KGGA…ADEL.

It belongs to the peptidase M10B family. Ca(2+) is required as a cofactor. The cofactor is Zn(2+).

It localises to the secreted. It carries out the reaction Preferential cleavage of bonds with hydrophobic residues in P1'.. Its function is as follows. Naturally present in the silkworm intestine and allows the emerging moth to dissolve its cocoon. The polypeptide is Serralysin (Serratia marcescens (strain ATCC 21074 / E-15)).